We begin with the raw amino-acid sequence, 760 residues long: Amyloid beta precursor protein binding family B member 2 (760 aa).

S123 and S160 each carry phosphoserine. Disordered regions lie at residues 177–295 (QNLG…LPPG) and 324–351 (PADL…KQPW). 2 stretches are compositionally biased toward polar residues: residues 212–230 (NKPQ…SSSP) and 261–275 (SWTT…PSSP). In terms of domain architecture, WW spans 290-322 (PDLPPGWKRVNDIAGTYYWHIPTGTTQWERPVS). A phosphoserine mark is found at S334, S409, and S412. PID domains are found at residues 413 to 580 (DPEA…LQVD) and 586 to 738 (TELV…VTTN).

As to quaternary structure, interacts (via C-terminus) with APP (via C-terminus). Interacts with APLP2 (via cytoplasmic domain). In terms of tissue distribution, expressed in the brain, retinal lens and muscle cells (at protein level).

The protein resides in the endoplasmic reticulum. Its subcellular location is the golgi apparatus. It is found in the early endosome. Its function is as follows. Plays a role in the maintenance of lens transparency, and may also play a role in muscle cell strength. Involved in hippocampal neurite branching and neuromuscular junction formation, as a result plays a role in spatial memory functioning. Activates transcription of APP. The chain is Amyloid beta precursor protein binding family B member 2 from Mus musculus (Mouse).